Consider the following 329-residue polypeptide: Deoxynucleotidyltransferase terminal-interacting protein 1 (329 aa).

The tract at residues 1–27 (MGATGDVEQPRGPGGAERGGPELGDAG) is disordered. Positions 12-22 (GPGGAERGGPE) are enriched in gly residues. The tract at residues 56–147 (MTTSFTDPAI…RLTHELPGIK (92 aa)) is important for dimerization. The a.T hook DNA-binding region spans 159–173 (RGSPIPKKRKGRPPG). Serine 161 carries the post-translational modification Phosphoserine. Positions 164–170 (PKKRKGR) match the Nuclear localization signal motif. The interval 197–316 (REGPKWDPAR…MRKYMETLRT (120 aa)) is important for DNA and nucleosome binding. Residues 216–237 (GSRANKALGMGGTRGRIYIKHP) constitute a DNA-binding region (H-T-H motif).

Monomer and homodimer. A minor proportion may form homotrimers. Interacts with ZNF541. Interacts with the terminal deoxynucleotidyltransferase DNTT. Interacts with TRERF1. Identified in a histone deacetylase complex that contains DNTTIP1, HDAC1 and MIDEAS; this complex assembles into a tetramer that contains four copies of each protein chain. Component of a histone deacetylase complex containing DNTTIP1, ZNF541, HDAC1 and HDAC2. Identified in a complex with KCTD19, HDAC1, HDAC2 and ZNF541.

The protein localises to the nucleus. Functionally, increases DNTT terminal deoxynucleotidyltransferase activity (in vitro). Also acts as a transcriptional regulator, binding to the consensus sequence 5'-GNTGCATG-3' following an AT-tract. Associates with RAB20 promoter and positively regulates its transcription. Binds DNA and nucleosomes; may recruit HDAC1 complexes to nucleosomes or naked DNA. The sequence is that of Deoxynucleotidyltransferase terminal-interacting protein 1 (DNTTIP1) from Bos taurus (Bovine).